We begin with the raw amino-acid sequence, 448 residues long: F-box/FBD/LRR-repeat protein At2g04230 (448 aa).

In terms of domain architecture, F-box spans glutamate 12–valine 64. LRR repeat units lie at residues proline 72–phenylalanine 98, isoleucine 149–glutamine 176, valine 177–arginine 202, serine 204–aspartate 225, leucine 226–glycine 251, isoleucine 271–leucine 296, and threonine 319–aspartate 345. The FBD domain maps to lysine 359 to threonine 410.

The sequence is that of F-box/FBD/LRR-repeat protein At2g04230 from Arabidopsis thaliana (Mouse-ear cress).